The sequence spans 122 residues: Flagellar protein FliT (122 aa).

Residues 1 to 50 (MTSTVEFINRWQRIALLSQSLLELAQRGEWDLLLQQEVSYLQSIETVMEK) form a required for homodimerization region. Residues 60-98 (IQDMVAGYIKQTLDNEQLLKGLLQQRLDELSSLIGQSTR) are fliD binding.

This sequence belongs to the FliT family. In terms of assembly, homodimer. Interacts with FliD and FlhC.

It localises to the cytoplasm. The protein localises to the cytosol. Its function is as follows. Dual-function protein that regulates the transcription of class 2 flagellar operons and that also acts as an export chaperone for the filament-capping protein FliD. As a transcriptional regulator, acts as an anti-FlhDC factor; it directly binds FlhC, thus inhibiting the binding of the FlhC/FlhD complex to class 2 promoters, resulting in decreased expression of class 2 flagellar operons. As a chaperone, effects FliD transition to the membrane by preventing its premature polymerization, and by directing it to the export apparatus. The polypeptide is Flagellar protein FliT (Salmonella schwarzengrund (strain CVM19633)).